We begin with the raw amino-acid sequence, 507 residues long: ATP synthase subunit alpha, chloroplastic (507 aa).

Position 170 to 177 (170 to 177) interacts with ATP; the sequence is GDRQTGKT.

It belongs to the ATPase alpha/beta chains family. In terms of assembly, F-type ATPases have 2 components, CF(1) - the catalytic core - and CF(0) - the membrane proton channel. CF(1) has five subunits: alpha(3), beta(3), gamma(1), delta(1), epsilon(1). CF(0) has four main subunits: a, b, b' and c.

The protein resides in the plastid. It is found in the chloroplast thylakoid membrane. It catalyses the reaction ATP + H2O + 4 H(+)(in) = ADP + phosphate + 5 H(+)(out). Produces ATP from ADP in the presence of a proton gradient across the membrane. The alpha chain is a regulatory subunit. This is ATP synthase subunit alpha, chloroplastic from Physcomitrium patens (Spreading-leaved earth moss).